Consider the following 174-residue polypeptide: Adenylate kinase (174 aa).

The segment at 12–41 is NMP; it reads STGDMLRAAIKAGTPLGLEAKKIIDEGGLV. Residues threonine 13, arginine 18, 39-41, 67-70, and glutamine 74 each bind AMP; these read GLV and GFPR. Positions 104 to 141 are LID; the sequence is GRRVHLASGRTYHVTYNPPKVEGKDDVTGEDLIQRDDD. ATP is bound by residues arginine 105 and 114-115; that span reads TY. AMP contacts are provided by arginine 138 and arginine 149.

The protein belongs to the adenylate kinase family. Monomer.

The protein resides in the cytoplasm. The catalysed reaction is AMP + ATP = 2 ADP. The protein operates within purine metabolism; AMP biosynthesis via salvage pathway; AMP from ADP: step 1/1. Its function is as follows. Catalyzes the reversible transfer of the terminal phosphate group between ATP and AMP. Plays an important role in cellular energy homeostasis and in adenine nucleotide metabolism. The sequence is that of Adenylate kinase from Neisseria flavescens.